A 204-amino-acid polypeptide reads, in one-letter code: NADH-quinone oxidoreductase subunit C (204 aa).

Belongs to the complex I 30 kDa subunit family. In terms of assembly, NDH-1 is composed of 14 different subunits. Subunits NuoB, C, D, E, F, and G constitute the peripheral sector of the complex.

It is found in the cell inner membrane. The catalysed reaction is a quinone + NADH + 5 H(+)(in) = a quinol + NAD(+) + 4 H(+)(out). Functionally, NDH-1 shuttles electrons from NADH, via FMN and iron-sulfur (Fe-S) centers, to quinones in the respiratory chain. The immediate electron acceptor for the enzyme in this species is believed to be ubiquinone. Couples the redox reaction to proton translocation (for every two electrons transferred, four hydrogen ions are translocated across the cytoplasmic membrane), and thus conserves the redox energy in a proton gradient. The sequence is that of NADH-quinone oxidoreductase subunit C from Rhodopseudomonas palustris (strain ATCC BAA-98 / CGA009).